Consider the following 177-residue polypeptide: MSDDVSTLLRTISWFAEPPSVLPEHIGDWLMETSSMTQRLEKYCAQLTVTLCREGFVSPQSLGEESEQLPPDERYWLREVVLYGDERPWLFGRTIVPQQTLDGTDSALTKIGNQPLGRYLFEQKSLTRDYIHTGCCEGLWARRSRLCLSGFPLLLTELFLPESPVYYTPSDEGWQVI.

Residues M36, R78, L116, and E157 each coordinate substrate.

The protein belongs to the UbiC family. Monomer.

It localises to the cytoplasm. The enzyme catalyses chorismate = 4-hydroxybenzoate + pyruvate. Its pathway is cofactor biosynthesis; ubiquinone biosynthesis. Functionally, removes the pyruvyl group from chorismate, with concomitant aromatization of the ring, to provide 4-hydroxybenzoate (4HB) for the ubiquinone pathway. The polypeptide is Chorismate pyruvate-lyase (Pectobacterium carotovorum subsp. carotovorum (strain PC1)).